Reading from the N-terminus, the 67-residue chain is ATP synthase F(0) complex subunit 8 (67 aa).

Residues 8–24 traverse the membrane as a helical segment; that stretch reads TWFITIISSMATLFILF. The residue at position 54 (Lys-54) is an N6-acetyllysine; alternate. N6-succinyllysine; alternate is present on Lys-54. Lys-57 is modified (N6-acetyllysine).

The protein belongs to the ATPase protein 8 family. Component of the ATP synthase complex composed at least of ATP5F1A/subunit alpha, ATP5F1B/subunit beta, ATP5MC1/subunit c (homooctomer), MT-ATP6/subunit a, MT-ATP8/subunit 8, ATP5ME/subunit e, ATP5MF/subunit f, ATP5MG/subunit g, ATP5MK/subunit k, ATP5MJ/subunit j, ATP5F1C/subunit gamma, ATP5F1D/subunit delta, ATP5F1E/subunit epsilon, ATP5PF/subunit F6, ATP5PB/subunit b, ATP5PD/subunit d, ATP5PO/subunit OSCP. ATP synthase complex consists of a soluble F(1) head domain (subunits alpha(3) and beta(3)) - the catalytic core - and a membrane F(0) domain - the membrane proton channel (subunits c, a, 8, e, f, g, k and j). These two domains are linked by a central stalk (subunits gamma, delta, and epsilon) rotating inside the F1 region and a stationary peripheral stalk (subunits F6, b, d, and OSCP). Interacts with PRICKLE3.

It localises to the mitochondrion membrane. Its function is as follows. Subunit 8, of the mitochondrial membrane ATP synthase complex (F(1)F(0) ATP synthase or Complex V) that produces ATP from ADP in the presence of a proton gradient across the membrane which is generated by electron transport complexes of the respiratory chain. ATP synthase complex consist of a soluble F(1) head domain - the catalytic core - and a membrane F(1) domain - the membrane proton channel. These two domains are linked by a central stalk rotating inside the F(1) region and a stationary peripheral stalk. During catalysis, ATP synthesis in the catalytic domain of F(1) is coupled via a rotary mechanism of the central stalk subunits to proton translocation. In vivo, can only synthesize ATP although its ATP hydrolase activity can be activated artificially in vitro. Part of the complex F(0) domain. The polypeptide is ATP synthase F(0) complex subunit 8 (Rattus norvegicus (Rat)).